We begin with the raw amino-acid sequence, 205 residues long: Thymidylate kinase (205 aa).

7 to 14 (GIDGSGKT) is an ATP binding site.

Belongs to the thymidylate kinase family.

It carries out the reaction dTMP + ATP = dTDP + ADP. Phosphorylation of dTMP to form dTDP in both de novo and salvage pathways of dTTP synthesis. The sequence is that of Thymidylate kinase from Wolbachia pipientis subsp. Culex pipiens (strain wPip).